We begin with the raw amino-acid sequence, 682 residues long: Two-component system protein A (682 aa).

Positions 11–41 (SLDDNDNGQQHQDEVQAKHQDQGHTCPSRPS) are disordered. Residues 21-32 (HQDEVQAKHQDQ) show a composition bias toward basic and acidic residues. PAS domains follow at residues 45-105 (LSRI…PILY) and 166-239 (MNET…LREG). The PAC domain occupies 241–292 (IEDEGWRYRRDGSRFWANVLITPIYQFGQHVGFVKVTRDLTERKEAEACMIA). The Histidine kinase domain occupies 307–530 (NISHEIRTPM…VFWFTAKMGG (224 aa)). Position 310 is a phosphohistidine; by autocatalysis (histidine 310). Residues 563–680 (HVLLVEDNIV…QLLRVLWKWF (118 aa)) enclose the Response regulatory domain. Aspartate 615 bears the 4-aspartylphosphate mark.

Post-translationally, activation probably requires a transfer of a phosphate group between a His in the histidine kinase domain and an Asp of the response regulatory domain.

The protein localises to the cytoplasm. It carries out the reaction ATP + protein L-histidine = ADP + protein N-phospho-L-histidine.. May be part of a two-component regulatory system required for formation of conidia on certain growth media. The polypeptide is Two-component system protein A (Emericella nidulans (strain FGSC A4 / ATCC 38163 / CBS 112.46 / NRRL 194 / M139) (Aspergillus nidulans)).